The following is a 218-amino-acid chain: UPF0758 protein SAUSA300_1608 (218 aa).

The MPN domain occupies 92-214; the sequence is KITQPSDVAD…FTSLVEAGYF (123 aa). Zn(2+) contacts are provided by His-163, His-165, and Asp-176. Residues 163 to 176 carry the JAMM motif motif; sequence HNHPSGDVTPSQED.

Belongs to the UPF0758 family.

The sequence is that of UPF0758 protein SAUSA300_1608 from Staphylococcus aureus (strain USA300).